Reading from the N-terminus, the 327-residue chain is Aspartate--ammonia ligase (327 aa).

The protein belongs to the class-II aminoacyl-tRNA synthetase family. AsnA subfamily.

Its subcellular location is the cytoplasm. It catalyses the reaction L-aspartate + NH4(+) + ATP = L-asparagine + AMP + diphosphate + H(+). Its pathway is amino-acid biosynthesis; L-asparagine biosynthesis; L-asparagine from L-aspartate (ammonia route): step 1/1. The sequence is that of Aspartate--ammonia ligase from Bacillus cereus (strain ATCC 10987 / NRS 248).